A 438-amino-acid polypeptide reads, in one-letter code: 3-phosphoshikimate 1-carboxyvinyltransferase (438 aa).

3-phosphoshikimate is bound by residues Lys-21, Ser-22, and Arg-26. Phosphoenolpyruvate is bound at residue Lys-21. Phosphoenolpyruvate is bound by residues Gly-95 and Arg-123. Ser-167, Gln-169, Asp-315, and Lys-342 together coordinate 3-phosphoshikimate. Gln-169 contributes to the phosphoenolpyruvate binding site. The Proton acceptor role is filled by Asp-315. Arg-346 and Arg-387 together coordinate phosphoenolpyruvate.

This sequence belongs to the EPSP synthase family. In terms of assembly, monomer.

The protein resides in the cytoplasm. It carries out the reaction 3-phosphoshikimate + phosphoenolpyruvate = 5-O-(1-carboxyvinyl)-3-phosphoshikimate + phosphate. It functions in the pathway metabolic intermediate biosynthesis; chorismate biosynthesis; chorismate from D-erythrose 4-phosphate and phosphoenolpyruvate: step 6/7. Functionally, catalyzes the transfer of the enolpyruvyl moiety of phosphoenolpyruvate (PEP) to the 5-hydroxyl of shikimate-3-phosphate (S3P) to produce enolpyruvyl shikimate-3-phosphate and inorganic phosphate. The sequence is that of 3-phosphoshikimate 1-carboxyvinyltransferase from Coxiella burnetii (strain CbuK_Q154) (Coxiella burnetii (strain Q154)).